We begin with the raw amino-acid sequence, 227 residues long: NADH-quinone oxidoreductase subunit C (227 aa).

It belongs to the complex I 30 kDa subunit family. In terms of assembly, NDH-1 is composed of 14 different subunits. Subunits NuoB, C, D, E, F, and G constitute the peripheral sector of the complex.

It localises to the cell inner membrane. The enzyme catalyses a quinone + NADH + 5 H(+)(in) = a quinol + NAD(+) + 4 H(+)(out). Its function is as follows. NDH-1 shuttles electrons from NADH, via FMN and iron-sulfur (Fe-S) centers, to quinones in the respiratory chain. The immediate electron acceptor for the enzyme in this species is believed to be ubiquinone. Couples the redox reaction to proton translocation (for every two electrons transferred, four hydrogen ions are translocated across the cytoplasmic membrane), and thus conserves the redox energy in a proton gradient. The sequence is that of NADH-quinone oxidoreductase subunit C from Legionella pneumophila (strain Paris).